A 392-amino-acid polypeptide reads, in one-letter code: Speckle-type POZ protein-like A (392 aa).

One can recognise an MATH domain in the interval 31–161 (KFSYMWTINN…DDKLTLFCEV (131 aa)). In terms of domain architecture, BTB spans 200 to 267 (TDCSLYVGGQ…IYTGKAPNLE (68 aa)).

This sequence belongs to the Tdpoz family. As to quaternary structure, homodimer. Heterodimer with SPOP. Component of cullin-RING-based BCR (BTB-CUL3-RBX1) E3 ubiquitin-protein ligase complexes containing homodimeric SPOPL or the heterodimer formed by SPOP and SPOPL.

It localises to the nucleus. The protein operates within protein modification; protein ubiquitination. In terms of biological role, component of a cullin-RING-based BCR (BTB-CUL3-RBX1) E3 ubiquitin-protein ligase complex that mediates the ubiquitination and subsequent proteasomal degradation of target proteins, but with relatively low efficiency. The polypeptide is Speckle-type POZ protein-like A (spopla) (Danio rerio (Zebrafish)).